The primary structure comprises 335 residues: Glucokinase (335 aa).

11-16 provides a ligand contact to ATP; it reads ADIGGT.

Belongs to the bacterial glucokinase family.

The protein localises to the cytoplasm. It carries out the reaction D-glucose + ATP = D-glucose 6-phosphate + ADP + H(+). In Stenotrophomonas maltophilia (strain K279a), this protein is Glucokinase.